Consider the following 344-residue polypeptide: Tryptophan--tRNA ligase (344 aa).

ATP contacts are provided by residues 20–22 (QPS) and 28–29 (GN). The short motif at 21-29 (PSGALHLGN) is the 'HIGH' region element. L-tryptophan is bound at residue Asp144. ATP is bound by residues 156–158 (GED), Val197, and 206–210 (KMSKS). A 'KMSKS' region motif is present at residues 206–210 (KMSKS).

It belongs to the class-I aminoacyl-tRNA synthetase family. As to quaternary structure, homodimer.

The protein localises to the cytoplasm. It carries out the reaction tRNA(Trp) + L-tryptophan + ATP = L-tryptophyl-tRNA(Trp) + AMP + diphosphate + H(+). Catalyzes the attachment of tryptophan to tRNA(Trp). This chain is Tryptophan--tRNA ligase, found in Caulobacter vibrioides (strain ATCC 19089 / CIP 103742 / CB 15) (Caulobacter crescentus).